Consider the following 233-residue polypeptide: tRNA (guanine-N(7)-)-methyltransferase (233 aa).

The disordered stretch occupies residues 1–36 (MSEFDPNPPRRNFYGRRHGKTLRQSQKGYLSEDLGS). S-adenosyl-L-methionine-binding residues include E68, E93, D120, and D142. Residue D142 is part of the active site. Residues K146, D178, and 211–214 (TRYE) contribute to the substrate site.

This sequence belongs to the class I-like SAM-binding methyltransferase superfamily. TrmB family.

It carries out the reaction guanosine(46) in tRNA + S-adenosyl-L-methionine = N(7)-methylguanosine(46) in tRNA + S-adenosyl-L-homocysteine. Its pathway is tRNA modification; N(7)-methylguanine-tRNA biosynthesis. Functionally, catalyzes the formation of N(7)-methylguanine at position 46 (m7G46) in tRNA. The chain is tRNA (guanine-N(7)-)-methyltransferase from Paracoccus denitrificans (strain Pd 1222).